The sequence spans 470 residues: ADAM DEC1 (470 aa).

Positions 1-30 (MLRGISQLPAVATMSWVLLPVLWLIVQTQA) are cleaved as a signal peptide. Residues 31–205 (IAIKQTPELT…QGPIRISRSL (175 aa)) constitute a propeptide that is removed on maturation. N-linked (GlcNAc...) asparagine glycosylation is present at Asn-61. The disordered stretch occupies residues 173–200 (FTSNQEEQDPANHTCGVKSTDGKQGPIR). N-linked (GlcNAc...) (complex) asparagine glycosylation occurs at Asn-184. One can recognise a Peptidase M12B domain in the interval 218–412 (KYIDLYLVLD…QKPKCLLQAP (195 aa)). N-linked (GlcNAc...) asparagine glycosylation occurs at Asn-237. 2 disulfides stabilise this stretch: Cys-328–Cys-407 and Cys-369–Cys-374. A Zn(2+)-binding site is contributed by His-352. The active site involves Glu-353. His-356 and Asp-362 together coordinate Zn(2+). Positions 420-470 (TPVCGNHLLEVGEDCDCGSPKECTNLCCEALTCKLKPGTDCGGDAPNHTTE) constitute a Disintegrin domain. N-linked (GlcNAc...) asparagine glycosylation is present at Asn-466.

Zn(2+) is required as a cofactor. As to expression, expressed highly in the small intestine and appendix, moderately in lymph node, mucosal lining of the colon, thymus, spleen and very weakly in the bone marrow. Predominantly expressed in dendritic cells (DC) of the germinal center. Weakly expressed in monocyte and highly expressed in macrophage. Absent in immature DC.

The protein resides in the secreted. May play an important role in the control of the immune response and during pregnancy. The chain is ADAM DEC1 (ADAMDEC1) from Homo sapiens (Human).